Consider the following 187-residue polypeptide: Ubiquinone biosynthesis protein COQ4 homolog, mitochondrial (187 aa).

Zn(2+)-binding residues include His-77, Asp-78, His-81, and Glu-93.

Belongs to the COQ4 family. Component of a multi-subunit COQ enzyme complex. The cofactor is Zn(2+).

The protein localises to the mitochondrion inner membrane. It catalyses the reaction a 4-hydroxy-3-methoxy-5-(all-trans-polyprenyl)benzoate + H(+) = a 2-methoxy-6-(all-trans-polyprenyl)phenol + CO2. The protein operates within cofactor biosynthesis; ubiquinone biosynthesis. Its function is as follows. Lyase that catalyzes the C1-decarboxylation of 4-hydroxy-3-methoxy-5-(all-trans-polyprenyl)benzoic acid into 2-methoxy-6-(all-trans-polyprenyl)phenol during ubiquinone biosynthesis. This is Ubiquinone biosynthesis protein COQ4 homolog, mitochondrial from Leishmania infantum.